Here is a 273-residue protein sequence, read N- to C-terminus: MNLDNAIHEAAKVLAGASRAAVFSGAGVSAESGIPTFRDPGGVWDRLNPAEVGDTQGLLASLEKNPEKLVAMFMELLAVFDAAIPNPGHRALFDLERMGILQAVITQNIDNLHQEAGNTQVIEMHGNGFRFRCLKCRSRRSHERHALIGRVKERLSTLPDFSPASIFAAMPDCDLCGSGMRPDVVMFGETVMEVENAFAAARSCDVMLALGTSGVVTPAAQIPAEAKASGAKVIVINPNENGFARVCDIYISMKTGQALPRIVEQVKKIRSGS.

The Deacetylase sirtuin-type domain occupies 1-269 (MNLDNAIHEA…PRIVEQVKKI (269 aa)). Residues 25–44 (GAGV…GGVW) and 107–110 (QNID) contribute to the NAD(+) site. The active-site Proton acceptor is the histidine 125. Residues cysteine 133, cysteine 136, cysteine 173, and cysteine 176 each contribute to the Zn(2+) site. NAD(+) is bound by residues 211–213 (GTS), 237–239 (NPN), and threonine 255.

This sequence belongs to the sirtuin family. Class III subfamily. The cofactor is Zn(2+).

It localises to the cytoplasm. It catalyses the reaction N(6)-acetyl-L-lysyl-[protein] + NAD(+) + H2O = 2''-O-acetyl-ADP-D-ribose + nicotinamide + L-lysyl-[protein]. Functionally, NAD-dependent protein deacetylase which modulates the activities of several proteins which are inactive in their acetylated form. This chain is NAD-dependent protein deacylase (cobB), found in Desulfosudis oleivorans (strain DSM 6200 / JCM 39069 / Hxd3) (Desulfococcus oleovorans).